Consider the following 91-residue polypeptide: uncharacterized protein (91 aa).

A helical membrane pass occupies residues 7 to 23 (IALVGVVVVLFGALRYQ).

The protein localises to the membrane. This is an uncharacterized protein from Haemophilus influenzae (strain ATCC 51907 / DSM 11121 / KW20 / Rd).